The primary structure comprises 228 residues: Translin (228 aa).

Positions 86–90 are DNA/RNA binding; that stretch reads RFHEH. Positions 177–198 are leucine-zipper; it reads LDSGFRLLNLKNDSLRKRYDGL. At lysine 187 the chain carries N6-acetyllysine. Serine 190 carries the post-translational modification Phosphoserine. The residue at position 199 (lysine 199) is an N6-acetyllysine.

This sequence belongs to the translin family. As to quaternary structure, ring-shaped heterooctamer of six TSN and two TSNAX subunits, DNA/RNA binding occurs inside the ring.

The protein resides in the cytoplasm. Its subcellular location is the nucleus. In terms of biological role, DNA-binding protein that specifically recognizes consensus sequences at the breakpoint junctions in chromosomal translocations, mostly involving immunoglobulin (Ig)/T-cell receptor gene segments. Seems to recognize single-stranded DNA ends generated by staggered breaks occurring at recombination hot spots. Functionally, exhibits both single-stranded and double-stranded endoribonuclease activity. May act as an activator of RNA-induced silencing complex (RISC) by facilitating endonucleolytic cleavage of the siRNA passenger strand. The protein is Translin (Tsn) of Mus musculus (Mouse).